Here is a 245-residue protein sequence, read N- to C-terminus: UDP-N-acetyl-D-mannosaminuronic acid transferase (245 aa).

It belongs to the glycosyltransferase 26 family.

The enzyme catalyses UDP-N-acetyl-alpha-D-mannosaminouronate + N-acetyl-alpha-D-glucosaminyl-di-trans,octa-cis-undecaprenyl diphosphate = beta-D-ManNAcA-(1-&gt;4)-alpha-D-GlcNAc-di-trans,octa-cis-undecaprenyl diphosphate + UDP + H(+). It participates in bacterial outer membrane biogenesis; enterobacterial common antigen biosynthesis. In terms of biological role, catalyzes the synthesis of Und-PP-GlcNAc-ManNAcA (Lipid II), the second lipid-linked intermediate involved in enterobacterial common antigen (ECA) synthesis. This is UDP-N-acetyl-D-mannosaminuronic acid transferase from Proteus mirabilis (strain HI4320).